The sequence spans 177 residues: ATP synthase subunit delta (177 aa).

Belongs to the ATPase delta chain family. In terms of assembly, F-type ATPases have 2 components, F(1) - the catalytic core - and F(0) - the membrane proton channel. F(1) has five subunits: alpha(3), beta(3), gamma(1), delta(1), epsilon(1). F(0) has three main subunits: a(1), b(2) and c(10-14). The alpha and beta chains form an alternating ring which encloses part of the gamma chain. F(1) is attached to F(0) by a central stalk formed by the gamma and epsilon chains, while a peripheral stalk is formed by the delta and b chains.

The protein resides in the cell inner membrane. In terms of biological role, f(1)F(0) ATP synthase produces ATP from ADP in the presence of a proton or sodium gradient. F-type ATPases consist of two structural domains, F(1) containing the extramembraneous catalytic core and F(0) containing the membrane proton channel, linked together by a central stalk and a peripheral stalk. During catalysis, ATP synthesis in the catalytic domain of F(1) is coupled via a rotary mechanism of the central stalk subunits to proton translocation. Functionally, this protein is part of the stalk that links CF(0) to CF(1). It either transmits conformational changes from CF(0) to CF(1) or is implicated in proton conduction. This chain is ATP synthase subunit delta, found in Herminiimonas arsenicoxydans.